A 316-amino-acid chain; its full sequence is Taste receptor type 2 member 3 (316 aa).

Over 1–7 (MFGFIEG) the chain is Extracellular. Residues 8-28 (VFLVLTITEFILGNLVNGFIV) traverse the membrane as a helical segment. Residues 29 to 50 (SINSSYWFKSKKISLSNFIITS) are Cytoplasmic-facing. A helical transmembrane segment spans residues 51–71 (LALFRIFLLWIIFIDSLIIVF). The Extracellular portion of the chain corresponds to 72–86 (SYQTHDSGIMMQLID). The chain crosses the membrane as a helical span at residues 87-107 (VFWTFTNHFSIWLISCLSVFY). Topologically, residues 108-128 (CLKIASFSHPSFLWLKWRASR) are cytoplasmic. Residues 129–149 (VVVGMLWGALLLSCVSTMSLM) form a helical membrane-spanning segment. The Extracellular segment spans residues 150-186 (NEFKIYSALTRSKDTPNMTEYIRLKRQEYNLMHVLGN). N166 carries an N-linked (GlcNAc...) asparagine glycan. A helical transmembrane segment spans residues 187–207 (LWKIPSLIVSLVAYLLLLLSL). The Cytoplasmic portion of the chain corresponds to 208–234 (GKHTQQMQQYSIDSRDQSAEAHKRAMR). Residues 235-255 (IISSFLLFFLFYFLSFMILSS) form a helical membrane-spanning segment. Residues 256-266 (SRFLPETRIAR) lie on the Extracellular side of the membrane. The helical transmembrane segment at 267-287 (IIGVVISMSYLVGDSFILIVC) threads the bilayer. Over 288-316 (NNKLKHTFVAMLPCECGHLKPGSKGPSAS) the chain is Cytoplasmic.

It belongs to the G-protein coupled receptor T2R family.

Its subcellular location is the membrane. In terms of biological role, gustducin-coupled receptor implicated in the perception of bitter compounds in the oral cavity and the gastrointestinal tract. Signals through PLCB2 and the calcium-regulated cation channel TRPM5. In Mus musculus (Mouse), this protein is Taste receptor type 2 member 3 (Tas2r3).